The primary structure comprises 539 residues: Chaperonin GroEL (539 aa).

ATP contacts are provided by residues 29-32 (TLGP), 86-90 (DGTTT), Gly-413, 479-481 (DAL), and Asp-495.

The protein belongs to the chaperonin (HSP60) family. As to quaternary structure, forms a cylinder of 14 subunits composed of two heptameric rings stacked back-to-back. Interacts with the co-chaperonin GroES.

The protein resides in the cytoplasm. The enzyme catalyses ATP + H2O + a folded polypeptide = ADP + phosphate + an unfolded polypeptide.. In terms of biological role, together with its co-chaperonin GroES, plays an essential role in assisting protein folding. The GroEL-GroES system forms a nano-cage that allows encapsulation of the non-native substrate proteins and provides a physical environment optimized to promote and accelerate protein folding. This chain is Chaperonin GroEL, found in Pseudothermotoga lettingae (strain ATCC BAA-301 / DSM 14385 / NBRC 107922 / TMO) (Thermotoga lettingae).